The chain runs to 607 residues: Karyogamy meiotic segregation protein 1 (607 aa).

The segment at 83 to 135 (DDSFANQAEKPSMEQQNSKNSIKEDANEHSVNSAHSKSSSNASPESLNPSQMM) is disordered. Low complexity predominate over residues 111 to 132 (HSVNSAHSKSSSNASPESLNPS).

In terms of assembly, interacts with mcp1 and sad1.

It localises to the cytoplasm. The protein localises to the cytoskeleton. The protein resides in the microtubule organizing center. It is found in the spindle pole body. Has a role in karyogamy, recombination and segregation during meiosis. Although it has been shown to associate with the spindle pole body it is unlikely to be involved in its formation or maintenance. In Schizosaccharomyces pombe (strain 972 / ATCC 24843) (Fission yeast), this protein is Karyogamy meiotic segregation protein 1 (kms1).